We begin with the raw amino-acid sequence, 243 residues long: Ras-related protein Rab-12 (243 aa).

Met-1 is modified (N-acetylmethionine). The tract at residues 1-36 is disordered; the sequence is MDPSAALHRRPAGGGLGAVSPALSGGQARRRKQPPR. A phosphoserine mark is found at Ser-20 and Ser-24. The GTP site is built by Gly-51, Val-52, Gly-53, Lys-54, Thr-55, Ser-72, and Thr-73. Mg(2+) is bound at residue Thr-55. 2 short sequence motifs (switch) span residues 64-78 and 96-113; these read DTFC…GVDF and DTAG…YYRS. Thr-73 and Asp-96 together coordinate Mg(2+). Gly-99 serves as a coordination point for GTP. Ser-105 is modified (phosphoserine). GTP is bound by residues Asn-154, Lys-155, Asp-157, Ser-185, Ala-186, and Lys-187. Residues Cys-242 and Cys-243 are each lipidated (S-geranylgeranyl cysteine).

This sequence belongs to the small GTPase superfamily. Rab family. Interacts with RABIF and OPTN. Interacts with LRRK2; interaction facilitates phosphorylation of Ser-105. Interacts with GDI1, GDI2 and CHM; these interactions are disrupted by phosphorylation on Ser-105. Interacts with RILPL1 and RILPL2; these interactions are dependent on phosphorylation of Ser-105. Mg(2+) is required as a cofactor. Phosphorylation of Ser-105 in the switch II region by LRRK2 prevents the association of RAB regulatory proteins, including CHM and RAB GDP dissociation inhibitors GDI1 and GDI2. Highest levels in skeletal and cardiac muscle. Also found in comparable amounts in brain, spinal cord and lung. Also detected in testis where it is expressed by Sertoli cells of the seminiferous tubules (at protein level).

It localises to the recycling endosome membrane. The protein resides in the lysosome membrane. Its subcellular location is the golgi apparatus membrane. It is found in the cytoplasmic vesicle. The protein localises to the autophagosome. The catalysed reaction is GTP + H2O = GDP + phosphate + H(+). Regulated by guanine nucleotide exchange factors (GEFs) including DENND3 which promote the exchange of bound GDP for free GTP. Regulated by GTPase activating proteins (GAPs) which increase the GTP hydrolysis activity. Inhibited by GDP dissociation inhibitors (GDIs). Its function is as follows. The small GTPases Rab are key regulators of intracellular membrane trafficking, from the formation of transport vesicles to their fusion with membranes. Rabs cycle between an inactive GDP-bound form and an active GTP-bound form that is able to recruit to membranes different sets of downstream effectors directly responsible for vesicle formation, movement, tethering and fusion. RAB12 may play a role in protein transport from recycling endosomes to lysosomes regulating, for instance, the degradation of the transferrin receptor. Involved in autophagy. The sequence is that of Ras-related protein Rab-12 from Rattus norvegicus (Rat).